The sequence spans 199 residues: UPF0462 protein C4orf33 homolog (199 aa).

Belongs to the UPF0462 family.

This Rattus norvegicus (Rat) protein is UPF0462 protein C4orf33 homolog.